Reading from the N-terminus, the 426-residue chain is Fatty alcohol:caffeoyl-CoA acyltransferase (426 aa).

Catalysis depends on proton acceptor residues histidine 162 and aspartate 374.

Belongs to the plant acyltransferase family. In terms of tissue distribution, expressed in the outermost circumference of mature roots, the endodermis of young roots and in the seed coat of developing seeds. Expressed in outer integument layer 1 of the seed coat.

Involved in the synthesis of alkyl hydroxycinnamates in root waxes. Functions as a fatty alcohol:hydroxy cinnamoyl-CoA acyltransferase with apparent preference for caffeoyl-CoA. In Arabidopsis thaliana (Mouse-ear cress), this protein is Fatty alcohol:caffeoyl-CoA acyltransferase.